A 223-amino-acid polypeptide reads, in one-letter code: Type II restriction enzyme BglII (223 aa).

D84 and V94 together coordinate Mg(2+).

As to quaternary structure, homodimer. Mg(2+) serves as cofactor.

It catalyses the reaction Endonucleolytic cleavage of DNA to give specific double-stranded fragments with terminal 5'-phosphates.. In terms of biological role, a P subtype restriction enzyme that recognizes the double-stranded sequence 5'-AGATCT-3' and cleaves after A-1. The chain is Type II restriction enzyme BglII (bglIIR) from Bacillus subtilis.